A 188-amino-acid chain; its full sequence is Adenine phosphoribosyltransferase (188 aa).

This sequence belongs to the purine/pyrimidine phosphoribosyltransferase family. Homodimer.

It localises to the cytoplasm. It catalyses the reaction AMP + diphosphate = 5-phospho-alpha-D-ribose 1-diphosphate + adenine. Its pathway is purine metabolism; AMP biosynthesis via salvage pathway; AMP from adenine: step 1/1. In terms of biological role, catalyzes a salvage reaction resulting in the formation of AMP, that is energically less costly than de novo synthesis. The protein is Adenine phosphoribosyltransferase of Frankia casuarinae (strain DSM 45818 / CECT 9043 / HFP020203 / CcI3).